The following is a 236-amino-acid chain: EEF1A lysine methyltransferase 2 (236 aa).

Positions 1–11 are enriched in gly residues; it reads MSSGADGGGGA. Residues 1 to 31 are disordered; it reads MSSGADGGGGAAVAARSDKGSPGEDGFVPSA. Residue serine 2 is modified to N-acetylserine. Position 21 is a phosphoserine (serine 21).

The protein belongs to the class I-like SAM-binding methyltransferase superfamily. EFM4 family.

It localises to the cytoplasm. Its subcellular location is the nucleus. The catalysed reaction is L-lysyl-[protein] + 3 S-adenosyl-L-methionine = N(6),N(6),N(6)-trimethyl-L-lysyl-[protein] + 3 S-adenosyl-L-homocysteine + 3 H(+). Functionally, protein-lysine methyltransferase that selectively catalyzes the trimethylation of EEF1A at 'Lys-318'. In Homo sapiens (Human), this protein is EEF1A lysine methyltransferase 2.